Consider the following 304-residue polypeptide: MTLSGRIPLGGQVTDLGYAAGWRLVRAMPEAMAQGVFGAGARYAARNGGPEQLRRNLARVVGKPPADVPDDLIRASLASYARYWREAFRLPAMDHGRLGEQLDVIDIDHLWSALDAGRGAVLALPHSGNWDMAGVWLVQNYGPFTTVAERLKPESLYRRFVEYRESLGFEVLPLTGGERPPFEVLAERLTDNRPICLMAERDLTRSGVQVDFFGEATRMPAGPAKLAIETGAALFPVHCWFEGDGWGMRVYPELDTSSGDVTAITQALADRFAANIATYPADWHMLQPQWIADLSDERRARLGT.

Catalysis depends on His-126, which acts as the Proton acceptor. The hexadecanoyl-CoA site is built by His-126 and Arg-164. Glu-200 is an active-site residue. Residues Ser-206 and Glu-229 each contribute to the hexadecanoyl-CoA site.

The protein belongs to the LpxL/LpxM/LpxP family. Monomer.

The protein localises to the cell inner membrane. The catalysed reaction is a 2,6-O-bis(alpha-D-mannopyranosyl)-1-phosphatidyl-1D-myo-inositol + an acyl-CoA = a 2-O-(alpha-D-mannosyl)-6-O-(6-O-acyl-alpha-D-mannosyl)-1-phosphatidyl-1D-myo-inositol + CoA. It carries out the reaction a 1,2-diacyl-sn-glycero-3-phospho-[alpha-D-mannopyranosyl-(1&lt;-&gt;6)-D-myo-inositol] + an acyl-CoA = a 1,2-diacyl-sn-glycero-3-phospho-[alpha-D-6-acyl-mannopyranosyl-(1&lt;-&gt;6)-D-myo-inositol] + CoA. It functions in the pathway phospholipid metabolism; phosphatidylinositol metabolism. Catalyzes the transfer of a palmitoyl moiety from palmitoyl-CoA to the 6-position of the mannose ring linked to the 2-position of myo-inositol in phosphatidyl-myo-inositol monomannoside (PIM1) or dimannoside (PIM2). This is Phosphatidylinositol mannoside acyltransferase from Mycolicibacterium smegmatis (strain ATCC 700084 / mc(2)155) (Mycobacterium smegmatis).